Consider the following 132-residue polypeptide: Large ribosomal subunit protein bL17 (132 aa).

It belongs to the bacterial ribosomal protein bL17 family. As to quaternary structure, part of the 50S ribosomal subunit. Contacts protein L32.

The polypeptide is Large ribosomal subunit protein bL17 (Polaromonas sp. (strain JS666 / ATCC BAA-500)).